We begin with the raw amino-acid sequence, 497 residues long: Glycerol kinase (497 aa).

Thr11 is an ADP binding site. Positions 11, 12, and 13 each coordinate ATP. Position 11 (Thr11) interacts with sn-glycerol 3-phosphate. Residue Arg15 participates in ADP binding. 4 residues coordinate sn-glycerol 3-phosphate: Arg81, Glu82, Tyr134, and Asp244. Residues Arg81, Glu82, Tyr134, Asp244, and Gln245 each contribute to the glycerol site. The ADP site is built by Thr266 and Gly309. ATP-binding residues include Thr266, Gly309, Gln313, and Gly410. Residues Gly410 and Asn414 each contribute to the ADP site.

Belongs to the FGGY kinase family.

It carries out the reaction glycerol + ATP = sn-glycerol 3-phosphate + ADP + H(+). Its pathway is polyol metabolism; glycerol degradation via glycerol kinase pathway; sn-glycerol 3-phosphate from glycerol: step 1/1. Inhibited by fructose 1,6-bisphosphate (FBP). In terms of biological role, key enzyme in the regulation of glycerol uptake and metabolism. Catalyzes the phosphorylation of glycerol to yield sn-glycerol 3-phosphate. This Fusobacterium nucleatum subsp. nucleatum (strain ATCC 25586 / DSM 15643 / BCRC 10681 / CIP 101130 / JCM 8532 / KCTC 2640 / LMG 13131 / VPI 4355) protein is Glycerol kinase.